Consider the following 555-residue polypeptide: Formate--tetrahydrofolate ligase (555 aa).

Residue 65 to 72 coordinates ATP; that stretch reads TPAGEGKS.

The protein belongs to the formate--tetrahydrofolate ligase family.

The catalysed reaction is (6S)-5,6,7,8-tetrahydrofolate + formate + ATP = (6R)-10-formyltetrahydrofolate + ADP + phosphate. It participates in one-carbon metabolism; tetrahydrofolate interconversion. The protein is Formate--tetrahydrofolate ligase of Staphylococcus aureus (strain bovine RF122 / ET3-1).